The chain runs to 90 residues: Co-chaperonin GroES (90 aa).

The protein belongs to the GroES chaperonin family. Heptamer of 7 subunits arranged in a ring. Interacts with the chaperonin GroEL.

It is found in the cytoplasm. Its function is as follows. Together with the chaperonin GroEL, plays an essential role in assisting protein folding. The GroEL-GroES system forms a nano-cage that allows encapsulation of the non-native substrate proteins and provides a physical environment optimized to promote and accelerate protein folding. GroES binds to the apical surface of the GroEL ring, thereby capping the opening of the GroEL channel. The chain is Co-chaperonin GroES from Borreliella afzelii (strain PKo) (Borrelia afzelii).